A 216-amino-acid polypeptide reads, in one-letter code: Protein ADP-ribose pyrophosphatase ORF38 (216 aa).

Residues 1–177 (MRNAAGLFMI…DYSNYIEFFD (177 aa)) form the Nudix hydrolase domain. Positions 48-70 (GHRDCCDAKVYETAVREFVEETG) match the Nudix box motif.

Its subcellular location is the host cytoplasm. It is found in the host nucleus. The enzyme catalyses ADP-D-ribose + H2O = D-ribose 5-phosphate + AMP + 2 H(+). Its function is as follows. Plays an important role in virus replication most probably through its hydrolyzing ADP-ribose activity in host cells. May function in viral DNA replication or transcription directly, or by removing toxic substances or metabolic intermediates. The chain is Protein ADP-ribose pyrophosphatase ORF38 from Lepidoptera (butterflies and moths).